The following is a 129-amino-acid chain: Small ribosomal subunit protein uS11 (129 aa).

Belongs to the universal ribosomal protein uS11 family. As to quaternary structure, part of the 30S ribosomal subunit. Interacts with proteins S7 and S18. Binds to IF-3.

In terms of biological role, located on the platform of the 30S subunit, it bridges several disparate RNA helices of the 16S rRNA. Forms part of the Shine-Dalgarno cleft in the 70S ribosome. The protein is Small ribosomal subunit protein uS11 of Francisella tularensis subsp. mediasiatica (strain FSC147).